The primary structure comprises 78 residues: Serine rich endogenous peptide 12 (78 aa).

An N-terminal signal peptide occupies residues methionine 1 to cysteine 24. Residues arginine 25–arginine 43 constitute a propeptide, removed in mature form. The disordered stretch occupies residues serine 47–tyrosine 78. An SCOOP motif motif is present at residues serine 50 to arginine 64. Positions serine 56 to serine 58 match the SxS motif essential for MIK2 binding motif.

This sequence belongs to the serine rich endogenous peptide (SCOOP) phytocytokine family. In terms of assembly, interacts with MIK2 (via extracellular leucine-rich repeat domain); this interaction triggers the formation of complex between MIK2 and the BAK1/SERK3 and SERK4 coreceptors, and subsequent BAK1 activation by phosphorylation on 'Ser-612'. As to expression, mostly expressed in the whole root system, and, to a lower extent, in seedlings shoots.

Its subcellular location is the cell membrane. The protein localises to the secreted. The protein resides in the extracellular space. It localises to the apoplast. Brassicaceae-specific phytocytokine (plant endogenous peptide released into the apoplast) perceived by MIK2 in a BAK1/SERK3 and SERK4 coreceptors-dependent manner, that modulates various physiological and antimicrobial processes including root growth prevention, phospholipid signaling pathway activation (e.g. accumulation of phosphatidic acid (PA), but transient reduction of phosphatidylinositol 4,5-bisphosphate (PIP(2)) levels) and reactive oxygen species (ROS) response regulation. Moderates primary root growth, and regulates root meristems and cell elongation; this root growth regulation is associated with the modulation of ROS metabolism and alteration of cell wall structure, and depends on variations in many genes expression. Promotes ROS (e.g. superoxide anion O(2) and hydrogen peroxide H(2)O(2)) production and MAPK (e.g. MPK3, MPK4 and MPK6) activation in a MIK2-dependent manner, thus leading to the up-regulation of immune-related marker genes (e.g. WRKY30, WRKY33 and CYP81F2). Involved in biotic and oxidative stress responses; acts as a negative regulator of defense against necrotrophic pathogens such as the bacteria Erwinia amylovora and the fungus Alternaria brassicicola. Able to prime defense responses against the pathogenic bacteria Pseudomonas syringae pv. tomato DC3000. Contributes to the triggering of defense responses toward generalist herbivores such as Spodoptera littoralis, probably via the activation of jasmonate and indole glucosinolate biosynthesis. Triggers the expression of several PROSCOOP genes (e.g. PROSCOOP3, PROSCOOP7, PROSCOOP12 and PROSCOOP13). The polypeptide is Serine rich endogenous peptide 12 (Arabidopsis thaliana (Mouse-ear cress)).